A 91-amino-acid polypeptide reads, in one-letter code: Acylphosphatase (91 aa).

The Acylphosphatase-like domain occupies 4–91 (RAMVTVKGMV…GEFDDFHIAY (88 aa)). Residues Arg-19 and Asn-37 contribute to the active site.

This sequence belongs to the acylphosphatase family.

It carries out the reaction an acyl phosphate + H2O = a carboxylate + phosphate + H(+). The polypeptide is Acylphosphatase (acyP) (Geotalea uraniireducens (strain Rf4) (Geobacter uraniireducens)).